Reading from the N-terminus, the 251-residue chain is NADPH-dependent oxidoreductase (251 aa).

This sequence belongs to the flavin oxidoreductase frp family. FMN is required as a cofactor.

In terms of biological role, reduces FMN, organic nitro compounds and disulfide DTNB. Involved in maintenance of the cellular redox state and the disulfide stress response. This Staphylococcus haemolyticus (strain JCSC1435) protein is NADPH-dependent oxidoreductase (nfrA).